The sequence spans 549 residues: Ankyrin repeat domain-containing protein SOWAHA (549 aa).

Residues 1–17 (MALAAAAAAAAAGVSQA) form the signal peptide. Disordered stretches follow at residues 82–219 (KPRP…PCML) and 235–256 (EEPG…PLLL). The span at 203–216 (PGPGAAKGPPQQKP) shows a compositional bias: low complexity. The segment covering 235–248 (EEPGLRRQLSEEPS) has biased composition (basic and acidic residues). The residue at position 260 (Ser260) is a Phosphoserine. ANK repeat units follow at residues 345-374 (SGFT…RSGA) and 384-414 (GGYT…QVHV). Residues 513–549 (PRKKTKIRGGLPAFSEISRRPTPGPLAGLVPSLPPTT) are disordered.

The protein belongs to the SOWAH family.

This chain is Ankyrin repeat domain-containing protein SOWAHA (SOWAHA), found in Homo sapiens (Human).